The primary structure comprises 184 residues: Ribosome-recycling factor (184 aa).

This sequence belongs to the RRF family.

It localises to the cytoplasm. In terms of biological role, responsible for the release of ribosomes from messenger RNA at the termination of protein biosynthesis. May increase the efficiency of translation by recycling ribosomes from one round of translation to another. This chain is Ribosome-recycling factor, found in Caldicellulosiruptor saccharolyticus (strain ATCC 43494 / DSM 8903 / Tp8T 6331).